Reading from the N-terminus, the 1030-residue chain is MKASLTFSLSGIYAPCSISRDIYLEYGDKKAECLYGTIRLPQYGPGCTPGKIVHCVLDDSLPFCSIVVPSKLFGFMPTQPTMDFCYFEPILDNVVPVLDSVTFLINEQLYSKLMDLPQEMQQIQFLHYKYNINSMETVVHSRDILTSGLCQILNCSPFPQGLVDFTETQLILVNDTEQKLSALKYANEDEEYALPKIGTNSALSIDLESLPCTISRDLLRPAPHINDDNSIYAFTDAETLLRLDVTSGSFITVSNMGCVRLVKLFVLLLPNGFKKRTIYAPPKIIASFPDCSVVTISKSNIGHTDIPIANQVFISRVGGWLQSQKCFQNIILTTLKKFFSESKRILCQNDLIPIAFDSSMADLNIAEENDESDDEDELGQYYKNDSLVWFFVTSAELDCFSKDNSHFIIDPNRTKLITTNITNRRPLPLSRSNLQRYYGFAETFYYDLHIFPYVRQLVNILETSFNCSQRGITLNASVLLHSTTNNVGKATMVRFASKYLGIHLLEIDCLSLTSNSRQLDSTSKIIGYIRAKCENVLPYASPAVIFLAHLDSILLDVNANQDPEAIKLQKSINFEMSKLLDDFTFKFPGTTFVGSVNNIDNVPSSFRSHMRFEILVPVPSEAQRLRIFQWYLSSHELNRDVQQKVPVSYMDNISFSSLSSYSAGLTPLDIKSIVETARMTATARFYQESKKCGWLPQSILITQEDLSKATSKARNEFSVSIGAPQIPNVTWDDIGGIDFVKGEILDTIDMPLKHPELFTSGMKKRSGILFYGPPGTGKTLMAKAIATNFSLNFFSVKGPELLNMYIGESEANVRRVFQKAREAKPCVIFFDEIDSVAPKRGNQGDSGGVMDRIVSQLLAELDGMSTDADGVFVIGATNRPDLLDEALLRPGRFDKLLYLGIPDTDTKQLNILEALTRKFVLDNDVKLIELAKLCPFNYTGADFYALCSDAMLNAMSRIARMVEKKVSQHNELTGENISTRRWFDKIATKEDTKVVVKMEDFLKAQEQLTPSVSRAELNHYEAVRANFEGA.

The interval 478–683 (VLLHSTTNNV…VETARMTATA (206 aa)) is AAA-cassette D1. The segment at 767-956 (GILFYGPPGT…CSDAMLNAMS (190 aa)) is AAA-cassette D2. 772–779 (GPPGTGKT) contacts ATP.

The protein belongs to the AAA ATPase family. In terms of assembly, interacts with PEX1; forming the PEX1-PEX6 AAA ATPase complex, which is composed of a heterohexamer formed by a trimer of PEX1-PEX6 dimers. Interacts with PEX15; anchors PEX1-PEX6 heterooligomers to the peroxisomal membrane and mediates their association with the peroxisomal importomer. Interacts with UBP15.

It localises to the cytoplasm. The protein resides in the cytosol. The protein localises to the peroxisome membrane. The catalysed reaction is ATP + H2O = ADP + phosphate + H(+). Functionally, component of the PEX1-PEX6 AAA ATPase complex, a protein dislocase complex that mediates the ATP-dependent extraction of the PEX5 receptor from peroxisomal membranes, an essential step for PEX5 recycling. Specifically recognizes PEX5 monoubiquitinated at 'Cys-6', and pulls it out of the peroxisome lumen through the PEX2-PEX10-PEX12 retrotranslocation channel. Extraction by the PEX1-PEX6 AAA ATPase complex is accompanied by unfolding of the TPR repeats and release of bound cargo from PEX5. The polypeptide is Peroxisomal ATPase PEX6 (Saccharomyces cerevisiae (strain ATCC 204508 / S288c) (Baker's yeast)).